We begin with the raw amino-acid sequence, 414 residues long: Probable uracil permease (414 aa).

At 1 to 14 (MTNQIPPSLAENQS) the chain is on the cytoplasmic side. The chain crosses the membrane as a helical span at residues 15–38 (KLKQSFVGLQMLFVAFGALVLVPL). The Periplasmic segment spans residues 39 to 42 (ITGL). A helical transmembrane segment spans residues 43–62 (DSNTALLTAGVGTLLFQFCT). The Cytoplasmic portion of the chain corresponds to 63–65 (GKQ). A discontinuously helical membrane pass occupies residues 66 to 82 (VPIFLASSFAFIAPIQY). Phenylalanine 74 lines the uracil pocket. Topologically, residues 83–91 (GVQTWGIAT) are periplasmic. The helical transmembrane segment at 92–112 (TMGGLAFTGLVYFALSTLVKL) threads the bilayer. Residues 113-124 (RGAEALQRFFPP) are Cytoplasmic-facing. A helical transmembrane segment spans residues 125–146 (VVVGPVIIIIGMGLAPIAVDMS). At 147–155 (LGKNSAYAY) the chain is on the periplasmic side. A helical membrane pass occupies residues 156 to 171 (NDAVLVSMVTLLTTLS). Topologically, residues 172–178 (VAVFAKG) are cytoplasmic. Residues 179–199 (LMKLIPIMFGITAGYILCLFL) form a helical membrane-spanning segment. The Periplasmic segment spans residues 200–224 (GLINFQPVIDAPWFSLPKLTTPEFN). A helical transmembrane segment spans residues 225-248 (LEAILYMLPIAIAPAVEHVGGIMA). Glutamate 241 is a binding site for uracil. The Cytoplasmic segment spans residues 249–261 (ISSVTGKDFLKKP). A helical transmembrane segment spans residues 262 to 281 (GLHRTLLGDGIATAAASLVG). The discontinuously helical transmembrane segment at 282 to 298 (GPPNTTYAEVTGAVMLT) threads the bilayer. Uracil is bound at residue glutamate 290. Topologically, residues 299–301 (RNF) are cytoplasmic. A helical transmembrane segment spans residues 302–319 (NPNIMTWAAVWAIAISFC). Topologically, residues 320-332 (GKVGAFLSTIPTI) are periplasmic. The helical transmembrane segment at 333–354 (VMGGIMMLVFGSIAVVGMSTLI) threads the bilayer. The Cytoplasmic portion of the chain corresponds to 355 to 365 (RGKVDVTEARN). An intramembrane region (discontinuously helical) is located at residues 366–401 (LCIISVVMTFGIGNMFVDVGNVSLKGISLCAIVAII). The Cytoplasmic segment spans residues 402–414 (LNLVLPKAKNEVE).

The protein belongs to the nucleobase:cation symporter-2 (NCS2) (TC 2.A.40) family.

Its subcellular location is the cell inner membrane. The catalysed reaction is uracil(in) + H(+)(in) = uracil(out) + H(+)(out). Transport of uracil in the cell. The protein is Probable uracil permease (uraA) of Haemophilus influenzae (strain ATCC 51907 / DSM 11121 / KW20 / Rd).